Consider the following 138-residue polypeptide: Ribosome-binding factor A (138 aa).

The segment at 117-138 is disordered; sequence AEDGQHQEGPASADAKPESTEE.

The protein belongs to the RbfA family. As to quaternary structure, monomer. Binds 30S ribosomal subunits, but not 50S ribosomal subunits or 70S ribosomes.

It localises to the cytoplasm. Functionally, one of several proteins that assist in the late maturation steps of the functional core of the 30S ribosomal subunit. Associates with free 30S ribosomal subunits (but not with 30S subunits that are part of 70S ribosomes or polysomes). Required for efficient processing of 16S rRNA. May interact with the 5'-terminal helix region of 16S rRNA. In Pseudomonas syringae pv. syringae (strain B728a), this protein is Ribosome-binding factor A.